We begin with the raw amino-acid sequence, 380 residues long: Anthranilate phosphoribosyltransferase (380 aa).

Residues Gly-109, Asn-119, Ser-121, Thr-122, Lys-142, Ser-144, and Ser-146 each contribute to the 5-phospho-alpha-D-ribose 1-diphosphate site. 2 residues coordinate Mg(2+): Asp-258 and Glu-259.

This sequence belongs to the anthranilate phosphoribosyltransferase family. As to quaternary structure, homodimer. Requires Mg(2+) as cofactor.

It catalyses the reaction N-(5-phospho-beta-D-ribosyl)anthranilate + diphosphate = 5-phospho-alpha-D-ribose 1-diphosphate + anthranilate. Its pathway is amino-acid biosynthesis; L-tryptophan biosynthesis; L-tryptophan from chorismate: step 2/5. Functionally, catalyzes the transfer of the phosphoribosyl group of 5-phosphorylribose-1-pyrophosphate (PRPP) to anthranilate to yield N-(5'-phosphoribosyl)-anthranilate (PRA), the second step in tryptophan biosynthesis. The polypeptide is Anthranilate phosphoribosyltransferase (Saccharomyces cerevisiae (strain ATCC 204508 / S288c) (Baker's yeast)).